We begin with the raw amino-acid sequence, 303 residues long: MPKILDGKKLAQEIELILQQAIESGLEVAKRRPGLAVLRVGDDPASGVYVNYKEKACDRIGVRSFAKHLKEDISLEELTEIIKSLNEEKNVDGILLQLPLPSHLDETALLRSIDPDKDADGLHPLNLGRLIKGEKGPRSCTPAGVMSLLERNQIKIEGKRAVVVGRSILVGKPMALMLEAANATVTIAHSKTKDLPSLTKEADLLVVAAGKPYLIGENHVSENCVVIDVGIHRLPPDEENMKELKKTKLCGDVKIFEIEDKVAAYSPVPGGVGPMTVTMLLANTVDRWQKHCGLPLTISHLLP.

Residues 165–167 (GRS), S190, and I231 each bind NADP(+).

The protein belongs to the tetrahydrofolate dehydrogenase/cyclohydrolase family. Homodimer.

The enzyme catalyses (6R)-5,10-methylene-5,6,7,8-tetrahydrofolate + NADP(+) = (6R)-5,10-methenyltetrahydrofolate + NADPH. The catalysed reaction is (6R)-5,10-methenyltetrahydrofolate + H2O = (6R)-10-formyltetrahydrofolate + H(+). It participates in one-carbon metabolism; tetrahydrofolate interconversion. In terms of biological role, catalyzes the oxidation of 5,10-methylenetetrahydrofolate to 5,10-methenyltetrahydrofolate and then the hydrolysis of 5,10-methenyltetrahydrofolate to 10-formyltetrahydrofolate. This chain is Bifunctional protein FolD, found in Prochlorococcus marinus (strain NATL2A).